Consider the following 192-residue polypeptide: Na(+)-translocating ferredoxin:NAD(+) oxidoreductase complex subunit A (192 aa).

A run of 6 helical transmembrane segments spans residues 4-24 (IFIMISAIFVNNFVLSRFLGI), 38-58 (VGMGVAVTFVMALASAITYVV), 71-91 (LQTIAFILIIAALVQLVEMII), 101-121 (ALGVYLPLITTNCAVLGVALI), 133-153 (IFNGVGAALGFTLAIVLFAGI), and 169-189 (FPIALLTAGLMAIAFLGFSGM).

Belongs to the NqrDE/RnfAE family. As to quaternary structure, the complex is composed of six subunits: RnfA, RnfB, RnfC, RnfD, RnfE and RnfG.

The protein localises to the cell membrane. The catalysed reaction is 2 reduced [2Fe-2S]-[ferredoxin] + Na(+)(in) + NAD(+) + H(+) = 2 oxidized [2Fe-2S]-[ferredoxin] + Na(+)(out) + NADH. Its function is as follows. Part of a membrane-bound complex that couples electron transfer with translocation of ions across the membrane. Couples electron transfer from reduced ferredoxin to NAD(+) with electrogenic movement of Na(+) out of the cell. Involved in caffeate respiration. The chain is Na(+)-translocating ferredoxin:NAD(+) oxidoreductase complex subunit A from Acetobacterium woodii (strain ATCC 29683 / DSM 1030 / JCM 2381 / KCTC 1655 / WB1).